Reading from the N-terminus, the 477-residue chain is Probable malate:quinone oxidoreductase (477 aa).

The protein belongs to the MQO family. FAD is required as a cofactor.

It carries out the reaction (S)-malate + a quinone = a quinol + oxaloacetate. It functions in the pathway carbohydrate metabolism; tricarboxylic acid cycle; oxaloacetate from (S)-malate (quinone route): step 1/1. The protein is Probable malate:quinone oxidoreductase of Synechococcus sp. (strain RCC307).